The primary structure comprises 392 residues: Arogenate dehydratase/prephenate dehydratase 1, chloroplastic (392 aa).

A chloroplast-targeting transit peptide spans 1–48 (MALRCFPIWVCPQTTHHRSPLMGLAEFDADKRRRFCLWECSSSASQRA). In terms of domain architecture, Prephenate dehydratase spans 107–282 (RISFQGIPGA…NVTRFLILAR (176 aa)). An ACT domain is found at 296-387 (SIVFSLEEGP…SFIRILGCYP (92 aa)).

In terms of tissue distribution, expressed in roots, leaves, stems, flowers and siliques.

It is found in the plastid. Its subcellular location is the chloroplast stroma. The enzyme catalyses L-arogenate + H(+) = L-phenylalanine + CO2 + H2O. It carries out the reaction prephenate + H(+) = 3-phenylpyruvate + CO2 + H2O. Its pathway is amino-acid biosynthesis; L-phenylalanine biosynthesis; L-phenylalanine from L-arogenate: step 1/1. It participates in amino-acid biosynthesis; L-phenylalanine biosynthesis; phenylpyruvate from prephenate: step 1/1. Functionally, converts the prephenate produced from the shikimate-chorismate pathway into phenylalanine. Dehydratase that uses arogenate and prephenate as substrates. Utilzes more efficiently arogenate than prephenate. This Arabidopsis thaliana (Mouse-ear cress) protein is Arogenate dehydratase/prephenate dehydratase 1, chloroplastic.